We begin with the raw amino-acid sequence, 152 residues long: Transcriptional regulator MraZ (152 aa).

SpoVT-AbrB domains are found at residues 5–52 and 81–124; these read VNQL…PLPE and AQEL…DESL.

The protein belongs to the MraZ family. In terms of assembly, forms oligomers.

It localises to the cytoplasm. The protein resides in the nucleoid. The sequence is that of Transcriptional regulator MraZ from Halorhodospira halophila (strain DSM 244 / SL1) (Ectothiorhodospira halophila (strain DSM 244 / SL1)).